The following is a 357-amino-acid chain: LINE-1 retrotransposable element ORF1 protein (357 aa).

Positions 1–40 (MAKGKRKNPTNRNQDHSPSSERSTPTPPSPGHPNTTENLD) are disordered. Residues 59-156 (HKSLKDLQES…IENIDTTVKE (98 aa)) are a coiled coil. An RNA recognition motif (RRM) domain region spans residues 179–274 (NLRIIGIDEN…KGRPIRITPD (96 aa)). The segment at 278 to 339 (ETMKARRAWT…STNPALQRII (62 aa)) is C-terminal domain (CTD).

Belongs to the transposase 22 family. Homotrimer (via coiled coil domain). May also form larger homooligomers. Interacts with Tex19.1 and UBR2. Interacts with MOV10. In terms of processing, polyubiquitinated, probably by UBR2, which induces its degradation. As to expression, expressed in meiotic spermatocytes and in the cerebellum (at protein level).

The protein localises to the nucleus. Its subcellular location is the nucleolus. It is found in the cytoplasm. The protein resides in the cytoplasmic ribonucleoprotein granule. It localises to the stress granule. Nucleic acid-binding protein which is essential for retrotransposition of LINE-1 elements in the genome. Functions as a nucleic acid chaperone binding its own transcript and therefore preferentially mobilizing the transcript from which they are encoded. This Mus musculus (Mouse) protein is LINE-1 retrotransposable element ORF1 protein.